Reading from the N-terminus, the 768-residue chain is Putative calcium up-regulated protein H (768 aa).

The tract at residues 1 to 22 is disordered; sequence MINIEDISKSSNQSEEKQLKST. 2 Ricin B-type lectin domains span residues 25 to 145 and 116 to 248; these read KPKY…WTTF and QGNG…WGIN.

Belongs to the cup family.

The protein localises to the cytoplasm. It is found in the membrane. In terms of biological role, may play an important role in stabilizing and/or regulating the cell membrane during Ca(2+) stress or certain stages of development. This Dictyostelium discoideum (Social amoeba) protein is Putative calcium up-regulated protein H (cupH).